An 89-amino-acid polypeptide reads, in one-letter code: Small ribosomal subunit protein uS15 (89 aa).

This sequence belongs to the universal ribosomal protein uS15 family. As to quaternary structure, part of the 30S ribosomal subunit. Forms a bridge to the 50S subunit in the 70S ribosome, contacting the 23S rRNA.

Functionally, one of the primary rRNA binding proteins, it binds directly to 16S rRNA where it helps nucleate assembly of the platform of the 30S subunit by binding and bridging several RNA helices of the 16S rRNA. In terms of biological role, forms an intersubunit bridge (bridge B4) with the 23S rRNA of the 50S subunit in the ribosome. The sequence is that of Small ribosomal subunit protein uS15 from Carboxydothermus hydrogenoformans (strain ATCC BAA-161 / DSM 6008 / Z-2901).